The sequence spans 80 residues: Translation initiation factor IF-1, chloroplastic (80 aa).

In terms of domain architecture, S1-like spans 1–74; that stretch reads MKEQKWIHEG…TRGRIIYRLR (74 aa).

Belongs to the IF-1 family. In terms of assembly, component of the 30S ribosomal translation pre-initiation complex which assembles on the 30S ribosome in the order IF-2 and IF-3, IF-1 and N-formylmethionyl-tRNA(fMet); mRNA recruitment can occur at any time during PIC assembly.

Its subcellular location is the plastid. It localises to the chloroplast. In terms of biological role, one of the essential components for the initiation of protein synthesis. Stabilizes the binding of IF-2 and IF-3 on the 30S subunit to which N-formylmethionyl-tRNA(fMet) subsequently binds. Helps modulate mRNA selection, yielding the 30S pre-initiation complex (PIC). Upon addition of the 50S ribosomal subunit IF-1, IF-2 and IF-3 are released leaving the mature 70S translation initiation complex. The protein is Translation initiation factor IF-1, chloroplastic of Illicium parviflorum (Yellow anise tree).